Reading from the N-terminus, the 578-residue chain is Triokinase/FMN cyclase (578 aa).

In terms of domain architecture, DhaK spans 9–336 (SVAGCADDAL…IDAETTASAW (328 aa)). Dihydroxyacetone-binding positions include 56-59 (GSGH), Lys-109, and Asp-114. His-221 acts as the Tele-hemiaminal-histidine intermediate in catalysis. Ser-350 carries the post-translational modification Phosphoserine. The region spanning 372–571 (KQMVLVLEWV…AAAILRAILE (200 aa)) is the DhaL domain. Residues 401–404 (DGDC), 446–447 (SS), Gly-486, and 494–495 (TM) contribute to the ATP site. Ser-511 and Ser-545 each carry phosphoserine. Position 556–558 (556–558 (DPG)) interacts with ATP.

Homodimer. Interacts with IFIH1 (via the CARD domains), the interaction is inhibited by viral infection. The cofactor is Mg(2+). Mn(2+) is required as a cofactor. Requires Co(2+) as cofactor.

It catalyses the reaction dihydroxyacetone + ATP = dihydroxyacetone phosphate + ADP + H(+). The catalysed reaction is D-glyceraldehyde + ATP = D-glyceraldehyde 3-phosphate + ADP + H(+). The enzyme catalyses FAD = riboflavin cyclic-4',5'-phosphate + AMP + H(+). Each activity is inhibited by the substrate(s) of the other. Its function is as follows. Catalyzes both the phosphorylation of dihydroxyacetone and of glyceraldehyde, and the splitting of ribonucleoside diphosphate-X compounds among which FAD is the best substrate. Represses IFIH1-mediated cellular antiviral response. The chain is Triokinase/FMN cyclase (TKFC) from Bos taurus (Bovine).